The primary structure comprises 164 residues: Protein SprT (164 aa).

Residues 14-156 (QQAETFFKRP…LCRRCREILV (143 aa)) enclose the SprT-like domain. His-69 contacts Zn(2+). Residue Glu-70 is part of the active site. Zn(2+) is bound at residue His-73.

It belongs to the SprT family. Zn(2+) is required as a cofactor.

The protein resides in the cytoplasm. In Pseudomonas entomophila (strain L48), this protein is Protein SprT.